The sequence spans 104 residues: Cytochrome c-551 (104 aa).

The first 22 residues, methionine 1–alanine 22, serve as a signal peptide directing secretion. Heme c contacts are provided by cysteine 34, cysteine 37, histidine 38, and methionine 83.

Post-translationally, binds 1 heme c group covalently per subunit.

It is found in the periplasm. Electron donor for cytochrome cd1 in nitrite and nitrate respiration. The protein is Cytochrome c-551 (nirM) of Stutzerimonas stutzeri (Pseudomonas stutzeri).